The chain runs to 95 residues: Large ribosomal subunit protein bL25 (95 aa).

The protein belongs to the bacterial ribosomal protein bL25 family. As to quaternary structure, part of the 50S ribosomal subunit; part of the 5S rRNA/L5/L18/L25 subcomplex. Contacts the 5S rRNA. Binds to the 5S rRNA independently of L5 and L18.

In terms of biological role, this is one of the proteins that binds to the 5S RNA in the ribosome where it forms part of the central protuberance. This is Large ribosomal subunit protein bL25 from Shewanella sp. (strain ANA-3).